A 2176-amino-acid chain; its full sequence is Methyl-CpG-binding domain-containing protein 9 (2176 aa).

A compositionally biased stretch (polar residues) spans 1–13 (MEPTDSTNEQLGD). Disordered stretches follow at residues 1–20 (MEPT…AAVK) and 28–85 (GIDL…RDAS). Residues 83–133 (DASCGACGRPESIELVVVCDACERGFHMSCVNDGVEAAPSADWMCSDCRTG) form a PHD-type 1 zinc finger. Residues 86–131 (CGACGRPESIELVVVCDACERGFHMSCVNDGVEAAPSADWMCSDCR) form an RING-type 1; degenerate zinc finger. Positions 258 to 327 (RHFISERHGV…MDAEIRNENS (70 aa)) constitute an MBD domain. Residues 403–456 (GCPMQFEDFFVLSLGRIDIRQSYHNVNVIYPIGYKSCWHDKITGSLFTCEVSDG) form the FYR N-terminal domain. Residues 491–511 (EQNSDKLSNRRDSTQERDDDA) adopt a coiled-coil conformation. The FYR C-terminal domain occupies 550–698 (SSRVDFDKNL…ESCTNYRTLK (149 aa)). 3 short sequence motifs (nuclear localization signal) span residues 914–921 (SRRGRKKD), 1124–1131 (KKRTYISV), and 1256–1263 (YRKLECLS). The Pumilio repeat unit spans residues 1098–1137 (PTKKAVLSLLADIRGGDLVQRSIKGTKKRTYISVSDVIMK). Residues 1130-1245 (SVSDVIMKKC…EKFKSLYEAE (116 aa)) form the Bromo domain. Residues 1251 to 1273 (QKLKDYRKLECLSAEMKKEIKDI) are a coiled coil. Residues 1287–1337 (EGVCKVCGVDKDDDSVLLCDTCDAEYHTYCLNPPLIRIPDGNWYCPSCVIA) form a PHD-type 2 zinc finger. The RING-type 2; degenerate zinc finger occupies 1290–1335 (CKVCGVDKDDDSVLLCDTCDAEYHTYCLNPPLIRIPDGNWYCPSCV). The Nuclear localization signal motif lies at 1337-1344 (AKRMAQEA). Residues 1410–1437 (QHLEQCAEAIIEMQQKLRSLSSEWKNAK) are a coiled coil. Disordered regions lie at residues 1472 to 1553 (GCDP…NLPE) and 1565 to 1595 (GRNH…QELQ). Polar residues-rich tracts occupy residues 1492 to 1513 (SSTA…TQPG), 1523 to 1532 (KISSPETISS), and 1585 to 1595 (DASSQASQELQ). A coiled-coil region spans residues 1588–1628 (SQASQELQACQQDLSATSNEIQNLQQSIRSIESQLLKQSIR). The Nuclear localization signal motif lies at 1761-1768 (EKRYGPCI). The disordered stretch occupies residues 2136–2176 (IDETKPIISLPDQKSQPVSDSQERSSRVRRSGKKRKEPEGS).

Interacts with histone H4. In terms of tissue distribution, expressed in leaves, buds, flowers and stems.

Its subcellular location is the nucleus. The catalysed reaction is L-lysyl-[protein] + acetyl-CoA = N(6)-acetyl-L-lysyl-[protein] + CoA + H(+). In terms of biological role, probable transcriptional regulator that acts as a histone acetyltransferase. Mediates the acetylation of histone H3 and H4 of target loci (e.g. FLC). Involved in an auxin-independent regulation of shoot branching and flowering time. This is Methyl-CpG-binding domain-containing protein 9 (MBD9) from Arabidopsis thaliana (Mouse-ear cress).